A 201-amino-acid chain; its full sequence is Retinol-binding protein 4 (201 aa).

A signal peptide spans 1–18 (MKWVWALLLLAALGSGRA). 3 disulfides stabilise this stretch: C22–C178, C88–C192, and C138–C147. Position 116 (Q116) interacts with substrate. R139 carries the omega-N-methylarginine modification.

This sequence belongs to the calycin superfamily. Lipocalin family. As to quaternary structure, interacts with TTR. Interaction with TTR prevents its loss by filtration through the kidney glomeruli. Interacts with STRA6. In terms of tissue distribution, detected in blood plasma and in urine (at protein level).

Its subcellular location is the secreted. Its function is as follows. Retinol-binding protein that mediates retinol transport in blood plasma. Delivers retinol from the liver stores to the peripheral tissues. Transfers the bound all-trans retinol to STRA6, that then facilitates retinol transport across the cell membrane. This chain is Retinol-binding protein 4 (RBP4), found in Homo sapiens (Human).